The following is a 535-amino-acid chain: CTP synthase (535 aa).

Positions 1 to 267 are amidoligase domain; it reads MTKYIFVTGG…DQIVCDHLKL (267 aa). Ser-13 is a binding site for CTP. Ser-13 is a binding site for UTP. ATP is bound at residue 14-19; sequence SLGKGI. Tyr-54 contributes to the L-glutamine binding site. Asp-71 contributes to the ATP binding site. 2 residues coordinate Mg(2+): Asp-71 and Glu-141. CTP contacts are provided by residues 148–150, 188–193, and Lys-224; these read DIE and KTKPTQ. Residues 188 to 193 and Lys-224 each bind UTP; that span reads KTKPTQ. 240–242 is an ATP binding site; it reads RDA. The Glutamine amidotransferase type-1 domain maps to 292–534; sequence KIALVGKYVE…VRASITNKES (243 aa). Residue Gly-354 coordinates L-glutamine. Cys-381 functions as the Nucleophile; for glutamine hydrolysis in the catalytic mechanism. Residues 382–385, Glu-405, and Arg-462 contribute to the L-glutamine site; that span reads LGMQ. Residues His-507 and Glu-509 contribute to the active site.

It belongs to the CTP synthase family. In terms of assembly, homotetramer.

It carries out the reaction UTP + L-glutamine + ATP + H2O = CTP + L-glutamate + ADP + phosphate + 2 H(+). It catalyses the reaction L-glutamine + H2O = L-glutamate + NH4(+). The catalysed reaction is UTP + NH4(+) + ATP = CTP + ADP + phosphate + 2 H(+). The protein operates within pyrimidine metabolism; CTP biosynthesis via de novo pathway; CTP from UDP: step 2/2. Allosterically activated by GTP, when glutamine is the substrate; GTP has no effect on the reaction when ammonia is the substrate. The allosteric effector GTP functions by stabilizing the protein conformation that binds the tetrahedral intermediate(s) formed during glutamine hydrolysis. Inhibited by the product CTP, via allosteric rather than competitive inhibition. Functionally, catalyzes the ATP-dependent amination of UTP to CTP with either L-glutamine or ammonia as the source of nitrogen. Regulates intracellular CTP levels through interactions with the four ribonucleotide triphosphates. In Bacillus cereus (strain AH187), this protein is CTP synthase.